The chain runs to 118 residues: NADH-ubiquinone oxidoreductase chain 3 (118 aa).

Helical transmembrane passes span 5 to 25 (YIYI…LIFL), 62 to 82 (LIAI…PWSI), and 87 to 107 (GSFF…VGFI).

It belongs to the complex I subunit 3 family.

It localises to the mitochondrion membrane. It carries out the reaction a ubiquinone + NADH + 5 H(+)(in) = a ubiquinol + NAD(+) + 4 H(+)(out). Core subunit of the mitochondrial membrane respiratory chain NADH dehydrogenase (Complex I) that is believed to belong to the minimal assembly required for catalysis. Complex I functions in the transfer of electrons from NADH to the respiratory chain. The immediate electron acceptor for the enzyme is believed to be ubiquinone. This Acanthamoeba castellanii (Amoeba) protein is NADH-ubiquinone oxidoreductase chain 3 (ND3).